The sequence spans 95 residues: Large ribosomal subunit protein eL43 (95 aa).

The C4-type zinc finger occupies 38-59; the sequence is CPDCGSEAVSREGTGIWQCGKC.

Belongs to the eukaryotic ribosomal protein eL43 family. Zn(2+) serves as cofactor.

The polypeptide is Large ribosomal subunit protein eL43 (Halobacterium salinarum (strain ATCC 29341 / DSM 671 / R1)).